Consider the following 172-residue polypeptide: Interferon tau-2 (172 aa).

Disulfide bonds link Cys-1-Cys-99 and Cys-29-Cys-139. An N-linked (GlcNAc...) asparagine glycan is attached at Asn-78.

This sequence belongs to the alpha/beta interferon family. IFN-alphaII subfamily. Constitutively and exclusively expressed in the mononuclear cells of the extraembryonic trophectoderm.

It localises to the secreted. Functionally, paracrine hormone primarily responsible for maternal recognition of pregnancy. Interacts with endometrial receptors, probably type I interferon receptors, and blocks estrogen receptor expression, preventing the estrogen-induced increase in oxytocin receptor expression in the endometrium. This results in the suppression of the pulsatile endometrial release of the luteolytic hormone prostaglandin F2-alpha, hindering the regression of the corpus luteum (luteolysis) and therefore a return to ovarian cyclicity. This, and a possible direct effect of IFN-tau on prostaglandin synthesis, leads in turn to continued ovarian progesterone secretion, which stimulates the secretion by the endometrium of the nutrients required for the growth of the conceptus. In summary, displays particularly high antiviral and antiproliferative potency concurrently with particular weak cytotoxicity, high antiluteolytic activity and immunomodulatory properties. In contrast with other IFNs, IFN-tau is not virally inducible. The sequence is that of Interferon tau-2 (IFNT2) from Bos taurus (Bovine).